We begin with the raw amino-acid sequence, 409 residues long: Dipeptidase 1 (409 aa).

The signal sequence occupies residues Met-1–Ala-16. 2 residues coordinate Zn(2+): His-36 and Asp-38. Residue Asn-57 is glycosylated (N-linked (GlcNAc...) asparagine). Cysteines 87 and 170 form a disulfide. Residue Glu-141 participates in Zn(2+) binding. A substrate-binding site is contributed by His-168. Residues His-214 and His-235 each contribute to the Zn(2+) site. The cysteines at positions 242 and 274 are disulfide-linked. Residue Arg-246 coordinates substrate. Asn-279 carries an N-linked (GlcNAc...) asparagine glycan. Asp-304 provides a ligand contact to substrate. Ser-384 is lipidated: GPI-anchor amidated serine. Residues Ala-385 to Pro-409 constitute a propeptide, removed in mature form.

The protein belongs to the metallo-dependent hydrolases superfamily. Peptidase M19 family. As to quaternary structure, homodimer; disulfide-linked. Requires Zn(2+) as cofactor.

Its subcellular location is the apical cell membrane. It localises to the cell projection. The protein resides in the microvillus membrane. The protein localises to the cell membrane. The catalysed reaction is an L-aminoacyl-L-amino acid + H2O = 2 an L-alpha-amino acid. It catalyses the reaction leukotriene D4 + H2O = leukotriene E4 + glycine. The enzyme catalyses L-cystine-bis-glycine + 2 H2O = L-cystine + 2 glycine. It carries out the reaction a beta-lactam + H2O = a substituted beta-amino acid. The catalysed reaction is glycyldehydrophenylalanine + H2O = 2,3-didehydrophenylalanine + glycine. With respect to regulation, inhibited by L-penicillamine. Inhibited by cilastatin. Functionally, hydrolyzes a wide range of dipeptides. Hydrolyzes the conversion of leukotriene D4 to leukotriene E4. Hydrolyzes cystinyl-bis-glycine (cys-bis-gly) formed during glutathione degradation. Also possesses beta lactamase activity and hydrolytically inactivates beta-lactam antibiotics. Independently of its dipeptidase activity, acts as an adhesion receptor for neutrophil recruitment from bloodstream into inflamed lungs and liver. The polypeptide is Dipeptidase 1 (DPEP1) (Sus scrofa (Pig)).